The primary structure comprises 1058 residues: MAKRTDIKKIMVIGSGPIVIGQAAEFDYAGTQACLALKEEGYQVVLVNSNPATIMTDKEVADKVYIEPLTLAFVSRILRKERPDALLPTLGGQTGLNMAMELSKAGILQELGVELLGTTLSAIDQAEDRDLFKQLMKELGEPIPESEIVTTVEAAIGFANAIGYPVIVRPAFTLGGTGGGICSNEEVLRDIVENGLKLSPVTQCLIERSIAGFKEIEYEVMRDAADNALVVCSMENFDPVGIHTGDSIVFAPTQTLSDVENQLLRDASLRIIRALKIEGGCNVQLALDPNSFSYYVIEVNPRVSRSSALASKATGYPIAKIAAKIAVGLRLDDMLNPVTGTTYAMFEPALDYVVAKLPRFPFDKFERGERRLGTQMKATGEVMAIGRRIEECLLKACRSLEIGVHHNELKGLDTISDHELVAHIVRAQDDRLFYLSEALRRGYSIEELAGLTKIDLFFLDKLRHIVELEQDLIKKPVDIDLLIEAKRYGFSDQKIAELWQTDAASIRRLRRAYRVLPVYKMVDTCAAEFDSQTPYFYSTYEWENESIKSEKESVIVLGSGPIRIGQGVEFDYATVHSVKAIQAAGYEAIIMNSNPETVSTDFSISDKLYFEPLTFEEVMNVIELEQPKGVILQFGGQTAINLAEQLTKAGVPILGTQLEDLDCAEDRELFEKALKELGIPQPPGKTATNEAEALEAARAIGFPVLVRPSYVLGGRAMEIVENENDLRSYMKTAVKASPEHPVLIDSYILGKECEVDAISDGQSVLIPGIMEHIERAGVHSGDSMAVYPPQHLSKQVQDKIVDYTKRLAIGLNCIGMMNIQFVIQNEQVYVIEVNPRASRTVPFLSKVTNIPMAQVATKLILGQTLKDLGYQDGLYPESSLVHIKAPVFSFAKLAKVDSLLGPEMKSTGEVMGSDLTLEKALYKAFEASYLHMPEYGTIVFTIADDHKSEALILARRFSAIGYQIMATEGTAAFFADQGLDSQLVGKIGDNAHDIPALLRKGQIQAIINTVGTKRVTDKDGQMIRSSAIEQGVPLFTALDTAVAMLRVLESRTFSIEAI.

The carboxyphosphate synthetic domain stretch occupies residues 1 to 401 (MAKRTDIKKI…CLLKACRSLE (401 aa)). Residues arginine 129, arginine 169, glycine 175, glycine 176, arginine 208, isoleucine 210, glutamate 215, glycine 241, isoleucine 242, histidine 243, glutamine 284, and glutamate 298 each contribute to the ATP site. Positions 133 to 327 (KQLMKELGEP…IAKIAAKIAV (195 aa)) constitute an ATP-grasp 1 domain. 3 residues coordinate Mg(2+): glutamine 284, glutamate 298, and asparagine 300. Residues glutamine 284, glutamate 298, and asparagine 300 each contribute to the Mn(2+) site. The interval 402-546 (IGVHHNELKG…YSTYEWENES (145 aa)) is oligomerization domain. Residues 547-929 (IKSEKESVIV…ALYKAFEASY (383 aa)) form a carbamoyl phosphate synthetic domain region. Residues 671 to 861 (EKALKELGIP…MAQVATKLIL (191 aa)) form the ATP-grasp 2 domain. Residues arginine 707, serine 746, isoleucine 748, glutamate 752, glycine 777, valine 778, histidine 779, serine 780, glutamine 820, and glutamate 832 each coordinate ATP. Positions 820, 832, and 834 each coordinate Mg(2+). Mn(2+) contacts are provided by glutamine 820, glutamate 832, and asparagine 834. The region spanning 930–1058 (LHMPEYGTIV…ESRTFSIEAI (129 aa)) is the MGS-like domain. The allosteric domain stretch occupies residues 930-1058 (LHMPEYGTIV…ESRTFSIEAI (129 aa)).

It belongs to the CarB family. In terms of assembly, composed of two chains; the small (or glutamine) chain promotes the hydrolysis of glutamine to ammonia, which is used by the large (or ammonia) chain to synthesize carbamoyl phosphate. Tetramer of heterodimers (alpha,beta)4. The cofactor is Mg(2+). Requires Mn(2+) as cofactor.

The enzyme catalyses hydrogencarbonate + L-glutamine + 2 ATP + H2O = carbamoyl phosphate + L-glutamate + 2 ADP + phosphate + 2 H(+). The catalysed reaction is hydrogencarbonate + NH4(+) + 2 ATP = carbamoyl phosphate + 2 ADP + phosphate + 2 H(+). Its pathway is amino-acid biosynthesis; L-arginine biosynthesis; carbamoyl phosphate from bicarbonate: step 1/1. The protein operates within pyrimidine metabolism; UMP biosynthesis via de novo pathway; (S)-dihydroorotate from bicarbonate: step 1/3. Its function is as follows. Large subunit of the glutamine-dependent carbamoyl phosphate synthetase (CPSase). CPSase catalyzes the formation of carbamoyl phosphate from the ammonia moiety of glutamine, carbonate, and phosphate donated by ATP, constituting the first step of 2 biosynthetic pathways, one leading to arginine and/or urea and the other to pyrimidine nucleotides. The large subunit (synthetase) binds the substrates ammonia (free or transferred from glutamine from the small subunit), hydrogencarbonate and ATP and carries out an ATP-coupled ligase reaction, activating hydrogencarbonate by forming carboxy phosphate which reacts with ammonia to form carbamoyl phosphate. The chain is Carbamoyl phosphate synthase large chain from Streptococcus equi subsp. equi (strain 4047).